We begin with the raw amino-acid sequence, 487 residues long: 2-aminomuconic semialdehyde dehydrogenase (487 aa).

231-236 is an NAD(+) binding site; the sequence is GSTATA. Catalysis depends on E253, which acts as the Proton acceptor. C287 functions as the Nucleophile in the catalytic mechanism.

Belongs to the aldehyde dehydrogenase family.

The protein resides in the cytoplasm. The enzyme catalyses 2-aminomuconate 6-semialdehyde + NAD(+) + H2O = (2Z,4E)-2-aminomuconate + NADH + 2 H(+). The protein operates within amino-acid degradation; L-kynurenine degradation. Its function is as follows. Catalyzes the NAD-dependent oxidation of 2-aminomuconic semialdehyde of the kynurenine metabolic pathway in L-tryptophan degradation. The sequence is that of 2-aminomuconic semialdehyde dehydrogenase (aldh8a1) from Danio rerio (Zebrafish).